Reading from the N-terminus, the 127-residue chain is Small ribosomal subunit protein uS13 (127 aa).

Residues 99-127 (RGQRTRTNARTRRGRRGQAIGIKKKTLKK) are disordered.

It belongs to the universal ribosomal protein uS13 family. In terms of assembly, part of the 30S ribosomal subunit. Forms a loose heterodimer with protein S19. Forms two bridges to the 50S subunit in the 70S ribosome.

Located at the top of the head of the 30S subunit, it contacts several helices of the 16S rRNA. In the 70S ribosome it contacts the 23S rRNA (bridge B1a) and protein L5 of the 50S subunit (bridge B1b), connecting the 2 subunits; these bridges are implicated in subunit movement. Contacts the tRNAs in the A and P-sites. In Roseiflexus castenholzii (strain DSM 13941 / HLO8), this protein is Small ribosomal subunit protein uS13.